We begin with the raw amino-acid sequence, 157 residues long: Heat shock protein beta-9 (157 aa).

Residues 1–17 (MQRVGSSLPSGSQSASQ) show a composition bias toward low complexity. 2 disordered regions span residues 1–20 (MQRV…QCPS) and 136–157 (PPSE…KKLA). Residues 35 to 148 (QRLTEDAAAV…EAQTGPASRF (114 aa)) enclose the sHSP domain. The span at 148-157 (FRSRGSKKLA) shows a compositional bias: basic residues.

Belongs to the small heat shock protein (HSP20) family.

It localises to the cytoplasm. The protein localises to the nucleus. The sequence is that of Heat shock protein beta-9 (HSPB9) from Bos taurus (Bovine).